We begin with the raw amino-acid sequence, 459 residues long: Putrescine aminotransferase (459 aa).

Pyridoxal 5'-phosphate-binding positions include 150-151 and Gln-274; that span reads GT. N6-(pyridoxal phosphate)lysine is present on Lys-300. Thr-332 contributes to the pyridoxal 5'-phosphate binding site.

The protein belongs to the class-III pyridoxal-phosphate-dependent aminotransferase family. Putrescine aminotransferase subfamily. Requires pyridoxal 5'-phosphate as cofactor.

It catalyses the reaction an alkane-alpha,omega-diamine + 2-oxoglutarate = an omega-aminoaldehyde + L-glutamate. It carries out the reaction putrescine + 2-oxoglutarate = 1-pyrroline + L-glutamate + H2O. The catalysed reaction is cadaverine + 2-oxoglutarate = 5-aminopentanal + L-glutamate. The protein operates within amine and polyamine degradation; putrescine degradation; 4-aminobutanal from putrescine (transaminase route): step 1/1. In terms of biological role, catalyzes the aminotransferase reaction from putrescine to 2-oxoglutarate, leading to glutamate and 4-aminobutanal, which spontaneously cyclizes to form 1-pyrroline. This is the first step in one of two pathways for putrescine degradation, where putrescine is converted into 4-aminobutanoate (gamma-aminobutyrate or GABA) via 4-aminobutanal. Also functions as a cadaverine transaminase in a a L-lysine degradation pathway to succinate that proceeds via cadaverine, glutarate and L-2-hydroxyglutarate. This is Putrescine aminotransferase from Salmonella choleraesuis (strain SC-B67).